A 423-amino-acid chain; its full sequence is UPF0229 protein VP0986 (423 aa).

Residues 69-112 (GGVRERVHPGNDQFITGDKIERPKGGGQGSGSGEGNASPDGEGQ) form a disordered region. Positions 93–102 (GGGQGSGSGE) are enriched in gly residues.

It belongs to the UPF0229 family.

In Vibrio parahaemolyticus serotype O3:K6 (strain RIMD 2210633), this protein is UPF0229 protein VP0986.